A 116-amino-acid chain; its full sequence is Dolichyl-diphosphooligosaccharide--protein glycosyltransferase subunit DAD1 (116 aa).

The Cytoplasmic portion of the chain corresponds to 1 to 32; sequence MAKSSATKDAQALFHSLRSAYAATPTNLKIID. The helical transmembrane segment at 33–53 threads the bilayer; that stretch reads LYVIFAISTALIQVVYMAIVG. Residues 54–56 lie on the Lumenal side of the membrane; that stretch reads SFP. Residues 57-77 traverse the membrane as a helical segment; sequence FNSFLSGVLSCIGTAVLAVCL. Residues 78 to 95 lie on the Cytoplasmic side of the membrane; that stretch reads RIQVNKENKEFKDLPPER. Residues 96 to 116 traverse the membrane as a helical segment; sequence AFADFVLCNLVLHLVIMNFLG.

This sequence belongs to the DAD/OST2 family. In terms of assembly, component of the oligosaccharyltransferase (OST) complex.

The protein localises to the endoplasmic reticulum membrane. Its pathway is protein modification; protein glycosylation. In terms of biological role, subunit of the oligosaccharyl transferase (OST) complex that catalyzes the initial transfer of a defined glycan (Glc(3)Man(9)GlcNAc(2) in eukaryotes) from the lipid carrier dolichol-pyrophosphate to an asparagine residue within an Asn-X-Ser/Thr consensus motif in nascent polypeptide chains, the first step in protein N-glycosylation. N-glycosylation occurs cotranslationally and the complex associates with the Sec61 complex at the channel-forming translocon complex that mediates protein translocation across the endoplasmic reticulum (ER). All subunits are required for a maximal enzyme activity. The polypeptide is Dolichyl-diphosphooligosaccharide--protein glycosyltransferase subunit DAD1 (DAD1) (Solanum lycopersicum (Tomato)).